The chain runs to 400 residues: Proline-rich protein 5 (400 aa).

Residues 301–358 (TDSTSKLSMAGTKPPGEGERPPISNGQFPPLHNLSDSQQGLYNSQRDSPLLPAPSSSP) form a disordered region. A compositionally biased stretch (polar residues) spans 334-347 (LSDSQQGLYNSQRD). Low complexity predominate over residues 348–358 (SPLLPAPSSSP).

This sequence belongs to the PROTOR family. In terms of assembly, associated component of the mechanistic target of rapamycin complex 2 (mTORC2).

Its function is as follows. Associated subunit of mTORC2, which regulates cell growth and survival in response to hormonal signals. This is Proline-rich protein 5 (prr5) from Xenopus laevis (African clawed frog).